A 336-amino-acid chain; its full sequence is Potassium channel subfamily K member 1 (336 aa).

The Cytoplasmic segment spans residues 1–20 (MLQSLAGSSCVRLVERHRSA). A helical membrane pass occupies residues 21-41 (WCFGLLVLGYLLYLVFGAVVF). The Extracellular portion of the chain corresponds to 42 to 103 (SSVELPYEDL…SNASGNWNWD (62 aa)). N-linked (GlcNAc...) asparagine glycosylation occurs at Asn-95. The segment at residues 104-116 (FTSALFFASTVLS) is an intramembrane region (helical). The stretch at 117-122 (TTGYGH) is an intramembrane region. Residues 117–122 (TTGYGH) are selectivity filter 1. Over 123-132 (TVPLSDGGKA) the chain is Extracellular. A helical transmembrane segment spans residues 133–156 (FCIIYSVIGIPFTLLFLTAVVQRI). Topologically, residues 157-181 (TVHVTRRPVLYFHIRWGFSKQMVGI) are cytoplasmic. Residues 182–202 (VHAVVLGFVTVSCFFFIPAAV) form a helical membrane-spanning segment. Over 203–211 (FSVLEDDWN) the chain is Extracellular. Positions 212-224 (FLESFYFCFISLS) form an intramembrane region, helical. The interval 225-230 (TIGLGD) is selectivity filter 2. The stretch at 225-231 (TIGLGDY) is an intramembrane region. Topologically, residues 232-243 (VPGEGYNQKFRE) are extracellular. A helical transmembrane segment spans residues 244-267 (LYKIGITCYLLLGLIAMLVVLETF). At 268–336 (CELHELKKFR…SAYAEDSASH (69 aa)) the chain is on the cytoplasmic side. Residue Lys-274 forms a Glycyl lysine isopeptide (Lys-Gly) (interchain with G-Cter in SUMO) linkage. The segment at 293 to 299 (IVEHDQL) is important for intracellular retention in recycling endosomes.

The protein belongs to the two pore domain potassium channel (TC 1.A.1.8) family. Homodimer; disulfide-linked. Heterodimer with KCNK2; disulfide-linked. In astrocytes, forms mostly heterodimeric potassium channels with KCNK2, with only a minor proportion of functional channels containing homodimeric KCNK1. Interacts with KCNK3 and KCNK9, forming functional heterodimeric channels. Interacts with GNG4. Identified in a complex with PSD and ARF6; interacts only with PSD that is bound to ARF6. Interacts with UBE2I. In terms of processing, sumoylation is controversial. Sumoylated by UBE2I. Not sumoylated when expressed in xenopus oocytes or mammalian cells. Sumoylation inactivates the channel, but does not interfere with expression at the cell membrane. Sumoylation of a single subunit is sufficient to silence the dimeric channel. Sumoylation of KCNK1 is sufficient to silence heterodimeric channels formed by KCNK1 and KCNK3 or KCNK9. Desumoylated by SENP1; this activates the channel. Desumoylated by SENP1; this strongly increases halothane-mediated activation of heterodimeric channels formed with KCNK9. SENP1 treatment has no effect.

The protein localises to the cell membrane. Its subcellular location is the recycling endosome. It localises to the synaptic cell membrane. The protein resides in the cytoplasmic vesicle. It is found in the perikaryon. The protein localises to the cell projection. Its subcellular location is the dendrite. It localises to the apical cell membrane. The catalysed reaction is K(+)(in) = K(+)(out). The enzyme catalyses NH4(+)(in) = NH4(+)(out). It carries out the reaction Na(+)(in) = Na(+)(out). It catalyses the reaction Rb(+)(in) = Rb(+)(out). The catalysed reaction is Cs(+)(in) = Cs(+)(out). The enzyme catalyses Li(+)(in) = Li(+)(out). It carries out the reaction L-glutamate(out) = L-glutamate(in). It catalyses the reaction chloride(in) = chloride(out). Ion channel that contributes to passive transmembrane potassium transport and to the regulation of the resting membrane potential in brain astrocytes, but also in kidney and in other tissues. Forms dimeric channels through which potassium ions pass in accordance with their electrochemical gradient. The channel is selective for K(+) ions at physiological potassium concentrations and at neutral pH, but becomes permeable to Na(+) at subphysiological K(+) levels and upon acidification of the extracellular medium. The homodimer has very low potassium channel activity, when expressed in heterologous systems, and can function as weakly inward rectifying potassium channel. Channel activity is modulated by activation of serotonin receptors. Heterodimeric channels containing KCNK1 and KCNK2 have much higher activity, and may represent the predominant form in astrocytes. Heterodimeric channels containing KCNK1 and KCNK3 or KCNK9 have much higher activity. Heterodimeric channels formed by KCNK1 and KCNK9 may contribute to halothane-sensitive currents. Mediates outward rectifying potassium currents in dentate gyrus granule cells and contributes to the regulation of their resting membrane potential. Contributes to the regulation of action potential firing in dentate gyrus granule cells and down-regulates their intrinsic excitability. In astrocytes, the heterodimer formed by KCNK1 and KCNK2 is required for rapid glutamate release in response to activation of G-protein coupled receptors, such as F2R and CNR1. Required for normal ion and water transport in the kidney. Contributes to the regulation of the resting membrane potential of pancreatic beta cells. The low channel activity of homodimeric KCNK1 may be due to sumoylation. The low channel activity may be due to rapid internalization from the cell membrane and retention in recycling endosomes. Permeable to monovalent cations with ion selectivity for K(+) &gt; Rb(+) &gt;&gt; NH4(+) &gt;&gt; Cs(+) = Na(+) = Li(+). The polypeptide is Potassium channel subfamily K member 1 (Cavia porcellus (Guinea pig)).